We begin with the raw amino-acid sequence, 298 residues long: 5,10-methylenetetrahydrofolate reductase (298 aa).

Glutamate 28 functions as the Proton donor/acceptor in the catalytic mechanism. An NADH-binding site is contributed by threonine 59. FAD-binding residues include tyrosine 60, alanine 62, histidine 88, arginine 118, glycine 119, aspartate 120, alanine 132, tyrosine 152, histidine 156, alanine 159, aspartate 165, asparagine 168, and lysine 172. Aspartate 120 lines the (6S)-5-methyl-5,6,7,8-tetrahydrofolate pocket. An NADH-binding site is contributed by glutamine 183. Residues glutamine 183, glutamine 219, and arginine 279 each contribute to the (6S)-5-methyl-5,6,7,8-tetrahydrofolate site.

It belongs to the methylenetetrahydrofolate reductase family. FAD serves as cofactor.

It catalyses the reaction (6S)-5-methyl-5,6,7,8-tetrahydrofolate + NAD(+) = (6R)-5,10-methylene-5,6,7,8-tetrahydrofolate + NADH + H(+). It participates in one-carbon metabolism; tetrahydrofolate interconversion. The protein operates within amino-acid biosynthesis; L-methionine biosynthesis via de novo pathway. Its function is as follows. Catalyzes the NADH-dependent reduction of 5,10-methylenetetrahydrofolate to 5-methyltetrahydrofolate. Is required to provide the methyl group necessary for methionine synthetase to convert homocysteine to methionine; the methyl group is given by 5-methyltetrahydrofolate. This is 5,10-methylenetetrahydrofolate reductase (metF) from Pectobacterium carotovorum subsp. carotovorum (Erwinia carotovora subsp. carotovora).